A 286-amino-acid polypeptide reads, in one-letter code: MAGAKEIRSKIASIKSTQKITSAMEKVAVSKMRKAQMRMAASRPYAERIRQVIGHLANANPEYRHPFMIERAVKRVGYVVVSSDRGLCGGLNTNLFKALVKDMAVNRENGVEIDLCVVGSKGAAFFRNFGGNVVAAISHLGEEPSINDLIGSVKVMLDAYLEGRIDRLSVVSNKFINTMTQQPTVEQLIPLVATPDQELKHHWDYLYEPDAKELLDGLMVRYVESQVYQAVVENNAAEQAARMIAMKNATDNAGDLISDLQLIYNKARQAAITQEISEIVGGAAAV.

Belongs to the ATPase gamma chain family. In terms of assembly, F-type ATPases have 2 components, CF(1) - the catalytic core - and CF(0) - the membrane proton channel. CF(1) has five subunits: alpha(3), beta(3), gamma(1), delta(1), epsilon(1). CF(0) has three main subunits: a, b and c.

It localises to the cell inner membrane. In terms of biological role, produces ATP from ADP in the presence of a proton gradient across the membrane. The gamma chain is believed to be important in regulating ATPase activity and the flow of protons through the CF(0) complex. In Pseudomonas fluorescens (strain SBW25), this protein is ATP synthase gamma chain.